The chain runs to 399 residues: Putative 3'-5' exonuclease R431 (399 aa).

Residues 118-297 (FQIVDNWIEN…IYNELQLMTN (180 aa)) enclose the 3'-5' exonuclease domain. Residues 335–399 (ERRLKSIESK…NKYVIITRHC (65 aa)) enclose the R3H domain.

The chain is Putative 3'-5' exonuclease R431 from Acanthamoeba polyphaga (Amoeba).